The sequence spans 311 residues: Glycerol-3-phosphate dehydrogenase [NAD(P)+] (311 aa).

Tryptophan 12, arginine 31, arginine 32, and lysine 96 together coordinate NADPH. Residues lysine 96, glycine 124, and serine 126 each coordinate sn-glycerol 3-phosphate. NADPH is bound at residue alanine 128. Sn-glycerol 3-phosphate-binding residues include lysine 178, aspartate 231, serine 241, arginine 242, and asparagine 243. The Proton acceptor role is filled by lysine 178. Arginine 242 is an NADPH binding site. NADPH contacts are provided by valine 266 and glutamate 268.

Belongs to the NAD-dependent glycerol-3-phosphate dehydrogenase family.

The protein resides in the cytoplasm. It carries out the reaction sn-glycerol 3-phosphate + NAD(+) = dihydroxyacetone phosphate + NADH + H(+). The catalysed reaction is sn-glycerol 3-phosphate + NADP(+) = dihydroxyacetone phosphate + NADPH + H(+). Its pathway is membrane lipid metabolism; glycerophospholipid metabolism. Catalyzes the reduction of the glycolytic intermediate dihydroxyacetone phosphate (DHAP) to sn-glycerol 3-phosphate (G3P), the key precursor for phospholipid synthesis. The polypeptide is Glycerol-3-phosphate dehydrogenase [NAD(P)+] (Helicobacter hepaticus (strain ATCC 51449 / 3B1)).